The primary structure comprises 250 residues: Hydroxyacylglutathione hydrolase (250 aa).

7 residues coordinate Zn(2+): His-52, His-54, Asp-56, His-57, His-107, Asp-128, and His-166.

This sequence belongs to the metallo-beta-lactamase superfamily. Glyoxalase II family. Monomer. The cofactor is Zn(2+).

It carries out the reaction an S-(2-hydroxyacyl)glutathione + H2O = a 2-hydroxy carboxylate + glutathione + H(+). Its pathway is secondary metabolite metabolism; methylglyoxal degradation; (R)-lactate from methylglyoxal: step 2/2. Functionally, thiolesterase that catalyzes the hydrolysis of S-D-lactoyl-glutathione to form glutathione and D-lactic acid. The chain is Hydroxyacylglutathione hydrolase from Neisseria gonorrhoeae (strain NCCP11945).